The sequence spans 443 residues: Cobyrinate a,c-diamide synthase (443 aa).

The 192-residue stretch at 244-435 (KVSVAMDSAF…AHIHFLSNPR (192 aa)) folds into the GATase cobBQ-type domain. Cysteine 327 functions as the Nucleophile in the catalytic mechanism.

This sequence belongs to the CobB/CbiA family. Mg(2+) serves as cofactor.

It catalyses the reaction cob(II)yrinate + 2 L-glutamine + 2 ATP + 2 H2O = cob(II)yrinate a,c diamide + 2 L-glutamate + 2 ADP + 2 phosphate + 2 H(+). Its pathway is cofactor biosynthesis; adenosylcobalamin biosynthesis; cob(II)yrinate a,c-diamide from sirohydrochlorin (anaerobic route): step 10/10. Its function is as follows. Catalyzes the ATP-dependent amidation of the two carboxylate groups at positions a and c of cobyrinate, using either L-glutamine or ammonia as the nitrogen source. This is Cobyrinate a,c-diamide synthase from Thermoplasma acidophilum (strain ATCC 25905 / DSM 1728 / JCM 9062 / NBRC 15155 / AMRC-C165).